The sequence spans 957 residues: Glycine dehydrogenase (decarboxylating) (957 aa).

Lys-708 is modified (N6-(pyridoxal phosphate)lysine).

The protein belongs to the GcvP family. The glycine cleavage system is composed of four proteins: P, T, L and H. Pyridoxal 5'-phosphate is required as a cofactor.

The enzyme catalyses N(6)-[(R)-lipoyl]-L-lysyl-[glycine-cleavage complex H protein] + glycine + H(+) = N(6)-[(R)-S(8)-aminomethyldihydrolipoyl]-L-lysyl-[glycine-cleavage complex H protein] + CO2. The glycine cleavage system catalyzes the degradation of glycine. The P protein binds the alpha-amino group of glycine through its pyridoxal phosphate cofactor; CO(2) is released and the remaining methylamine moiety is then transferred to the lipoamide cofactor of the H protein. In Shigella flexneri, this protein is Glycine dehydrogenase (decarboxylating).